Consider the following 294-residue polypeptide: Flavin-dependent thymidylate synthase (294 aa).

In terms of domain architecture, ThyX spans 27-250 (GFIRVIDYMG…PFTYEAFEEY (224 aa)). Residues threonine 73, 96-98 (RHR), and glutamate 104 contribute to the FAD site. DUMP contacts are provided by residues 93 to 96 (QWIR), 104 to 108 (EYSAR), and arginine 189. A ThyX motif motif is present at residues 96-106 (RHRTASVNEYS). Residues 205-207 (NLH) and histidine 211 contribute to the FAD site. Arginine 216 contributes to the dUMP binding site. Catalysis depends on arginine 216, which acts as the Involved in ionization of N3 of dUMP, leading to its activation.

The protein belongs to the thymidylate synthase ThyX family. In terms of assembly, homotetramer. FAD serves as cofactor.

The enzyme catalyses dUMP + (6R)-5,10-methylene-5,6,7,8-tetrahydrofolate + NADPH + H(+) = dTMP + (6S)-5,6,7,8-tetrahydrofolate + NADP(+). Its pathway is pyrimidine metabolism; dTTP biosynthesis. Its function is as follows. Catalyzes the reductive methylation of 2'-deoxyuridine-5'-monophosphate (dUMP) to 2'-deoxythymidine-5'-monophosphate (dTMP) while utilizing 5,10-methylenetetrahydrofolate (mTHF) as the methyl donor, and NADPH and FADH(2) as the reductant. This chain is Flavin-dependent thymidylate synthase, found in Rickettsia typhi (strain ATCC VR-144 / Wilmington).